The primary structure comprises 329 residues: DNA-directed RNA polymerase subunit alpha (329 aa).

An alpha N-terminal domain (alpha-NTD) region spans residues M1–R235. Positions F249–E329 are alpha C-terminal domain (alpha-CTD).

This sequence belongs to the RNA polymerase alpha chain family. Homodimer. The RNAP catalytic core consists of 2 alpha, 1 beta, 1 beta' and 1 omega subunit. When a sigma factor is associated with the core the holoenzyme is formed, which can initiate transcription.

It catalyses the reaction RNA(n) + a ribonucleoside 5'-triphosphate = RNA(n+1) + diphosphate. Functionally, DNA-dependent RNA polymerase catalyzes the transcription of DNA into RNA using the four ribonucleoside triphosphates as substrates. The sequence is that of DNA-directed RNA polymerase subunit alpha from Cronobacter sakazakii (strain ATCC BAA-894) (Enterobacter sakazakii).